A 234-amino-acid polypeptide reads, in one-letter code: Synaptogyrin-1 (234 aa).

M1 bears the N-acetylmethionine mark. Topologically, residues 1-23 (MEGGAYGAGKAGGAFDPYTLVRQ) are cytoplasmic. Residues 20–173 (LVRQPHTILR…QAVLAFQRYQ (154 aa)) form the MARVEL domain. A helical transmembrane segment spans residues 24–44 (PHTILRVVSWVFSIVVFGSIV). Residues 45–71 (NEGYLNNPEEEEEFCIYNRNPNACSYG) lie on the Lumenal side of the membrane. A helical transmembrane segment spans residues 72–92 (VTVGVLAFLTCLLYLALDVYF). Residues 93–103 (PQISSVKDRKK) are Cytoplasmic-facing. Residues 104 to 124 (AVLSDIGVSAFWAFFWFVGFC) traverse the membrane as a helical segment. At 125-148 (FLANQWQVSKPKDNPLNEGTDAAR) the chain is on the lumenal side. Residues 149–169 (AAIAFSFFSIFTWAGQAVLAF) traverse the membrane as a helical segment. Over 170–234 (QRYQIGADSA…EPQGYQSQGY (65 aa)) the chain is Cytoplasmic. The tract at residues 201-234 (EPSAGSDPAGMGGTYQHPANAFDAEPQGYQSQGY) is disordered.

It belongs to the synaptogyrin family.

The protein resides in the cytoplasmic vesicle. Its subcellular location is the secretory vesicle. The protein localises to the synaptic vesicle membrane. It localises to the melanosome. In terms of biological role, may play a role in regulated exocytosis. Modulates the localization of synaptophysin/SYP into synaptic-like microvesicles and may therefore play a role in synaptic-like microvesicle formation and/or maturation. Involved in the regulation of short-term and long-term synaptic plasticity. In Mus musculus (Mouse), this protein is Synaptogyrin-1.